The chain runs to 386 residues: MGILGLSKLIADLAPQAIRESEMKHFFGRKVAIDASMCLYQFLIAVRSEGAQLATVNGDPTSHLMGMFYRTIRLLDNGIKPVYVFDGKPPDLKSGELAKRAERREEAEKALKAATDAGDDAEIEKFNRRLVRVTKEHAREAKELLSLMGVPYVDAPCEAEAQCAALVKAGKVYATATEDMDALTFGSTKLLRYLTYSEARKMPVKEFSYDKLLEGLEVNNREFIDLCILLGCDYCESIKGIGPKRAIELINNYRDIETILDNLDTSKYTVPENWNYKVARELFIEPEVADASAIDLKWTEPDEEGLVKFLCGDRQFSEERVRNGAKKLFKSKHAQTQVRLDSFFKTLPSTPNAVNAAKRKAEEAKKSANNKKAKTSGGAARGRRPK.

An N-domain region spans residues 1–104 (MGILGLSKLI…GELAKRAERR (104 aa)). Asp34 contacts Mg(2+). The DNA site is built by Arg47 and Arg70. The Mg(2+) site is built by Asp86, Glu158, Glu160, Asp179, and Asp181. The I-domain stretch occupies residues 122–253 (EIEKFNRRLV…KRAIELINNY (132 aa)). Glu158 is a binding site for DNA. DNA contacts are provided by Gly231 and Asp233. Mg(2+) is bound at residue Asp233. Residues 336 to 344 (TQVRLDSFF) form an interaction with PCNA region. Residues 354-386 (VNAAKRKAEEAKKSANNKKAKTSGGAARGRRPK) form a disordered region.

This sequence belongs to the XPG/RAD2 endonuclease family. FEN1 subfamily. Interacts with PCNA. Three molecules of FEN1 bind to one PCNA trimer with each molecule binding to one PCNA monomer. PCNA stimulates the nuclease activity without altering cleavage specificity. The cofactor is Mg(2+). In terms of processing, phosphorylated. Phosphorylation upon DNA damage induces relocalization to the nuclear plasma.

Its subcellular location is the nucleus. It is found in the nucleolus. The protein localises to the nucleoplasm. The protein resides in the mitochondrion. Functionally, structure-specific nuclease with 5'-flap endonuclease and 5'-3' exonuclease activities involved in DNA replication and repair. During DNA replication, cleaves the 5'-overhanging flap structure that is generated by displacement synthesis when DNA polymerase encounters the 5'-end of a downstream Okazaki fragment. It enters the flap from the 5'-end and then tracks to cleave the flap base, leaving a nick for ligation. Also involved in the long patch base excision repair (LP-BER) pathway, by cleaving within the apurinic/apyrimidinic (AP) site-terminated flap. Acts as a genome stabilization factor that prevents flaps from equilibrating into structures that lead to duplications and deletions. Also possesses 5'-3' exonuclease activity on nicked or gapped double-stranded DNA, and exhibits RNase H activity. Also involved in replication and repair of rDNA and in repairing mitochondrial DNA. This is Flap endonuclease 1 from Drosophila pseudoobscura pseudoobscura (Fruit fly).